An 894-amino-acid chain; its full sequence is GTPase-activating protein GYP5 (894 aa).

A compositionally biased stretch (basic and acidic residues) spans 1 to 23 (MSSDKSIEKNTDTIASEVHEGDN). Residues 1 to 324 (MSSDKSIEKN…VPPPLEEEMK (324 aa)) form a disordered region. S25 and S30 each carry phosphoserine. T89 carries the phosphothreonine modification. Over residues 134–164 (IEKEYDAVKENEKVYADTKEVVSSPENREVT) the composition is skewed to basic and acidic residues. Composition is skewed to polar residues over residues 184–200 (GTTT…SSEV) and 268–279 (SSENEVSAIPTT). A Phosphoserine modification is found at S389. The Rab-GAP TBC domain occupies 451-630 (GIPPQIRGII…RIFDIVFVEG (180 aa)). Positions 732–872 (EKEQKKEDHY…INKEQVSTAS (141 aa)) form a coiled coil.

Belongs to the GYP5 family. As to quaternary structure, interacts with GYL1 and RVS167; and is part of SEC4-containing complexes.

Its subcellular location is the cytoplasm. It localises to the bud. It is found in the bud neck. Functionally, GTPase-activating protein which accelerates the GTP hydrolysis rate of YPT1 and SEC4. Involved in ER to Golgi trafficking and polarized exocytosis. The polypeptide is GTPase-activating protein GYP5 (GYP5) (Saccharomyces cerevisiae (strain ATCC 204508 / S288c) (Baker's yeast)).